A 245-amino-acid polypeptide reads, in one-letter code: Orotidine 5'-phosphate decarboxylase (245 aa).

Substrate contacts are provided by residues aspartate 22, lysine 44, aspartate 71–threonine 80, threonine 131, arginine 192, glutamine 201, glycine 221, and arginine 222. Residue lysine 73 is the Proton donor of the active site.

The protein belongs to the OMP decarboxylase family. Type 1 subfamily. As to quaternary structure, homodimer.

It catalyses the reaction orotidine 5'-phosphate + H(+) = UMP + CO2. The protein operates within pyrimidine metabolism; UMP biosynthesis via de novo pathway; UMP from orotate: step 2/2. Its function is as follows. Catalyzes the decarboxylation of orotidine 5'-monophosphate (OMP) to uridine 5'-monophosphate (UMP). The polypeptide is Orotidine 5'-phosphate decarboxylase (Escherichia coli (strain K12 / MC4100 / BW2952)).